We begin with the raw amino-acid sequence, 131 residues long: uncharacterized protein (131 aa).

Positions 1–16 are cleaved as a signal peptide; it reads MDVLFVAIFAVPLILG.

The protein localises to the secreted. This is an uncharacterized protein from Homo sapiens (Human).